We begin with the raw amino-acid sequence, 597 residues long: Probable translation initiation factor IF-2 (597 aa).

A tr-type G domain is found at 4–221 (IRQPIIAVLG…LIAGLSQKYL (218 aa)). Residues 13–20 (GHVDHGKT) are G1. Residue 13-20 (GHVDHGKT) participates in GTP binding. The G2 stretch occupies residues 38-42 (GITQH). The segment at 77-80 (DTPG) is G3. GTP-binding positions include 77–81 (DTPGH) and 131–134 (NKID). The interval 131 to 134 (NKID) is G4. The segment at 199 to 201 (SAK) is G5.

Belongs to the TRAFAC class translation factor GTPase superfamily. Classic translation factor GTPase family. IF-2 subfamily.

Functionally, function in general translation initiation by promoting the binding of the formylmethionine-tRNA to ribosomes. Seems to function along with eIF-2. In Thermococcus onnurineus (strain NA1), this protein is Probable translation initiation factor IF-2.